Reading from the N-terminus, the 118-residue chain is NADH-quinone oxidoreductase subunit A 2 (118 aa).

Transmembrane regions (helical) follow at residues 5–25, 62–82, and 87–107; these read YLPI…SLIF, IIAM…PWAV, and LGMF…VGYI.

Belongs to the complex I subunit 3 family. NDH-1 is composed of 14 different subunits. Subunits NuoA, H, J, K, L, M, N constitute the membrane sector of the complex.

It is found in the cell inner membrane. It carries out the reaction a quinone + NADH + 5 H(+)(in) = a quinol + NAD(+) + 4 H(+)(out). Functionally, NDH-1 shuttles electrons from NADH, via FMN and iron-sulfur (Fe-S) centers, to quinones in the respiratory chain. The immediate electron acceptor for the enzyme in this species is believed to be ubiquinone. Couples the redox reaction to proton translocation (for every two electrons transferred, four hydrogen ions are translocated across the cytoplasmic membrane), and thus conserves the redox energy in a proton gradient. This chain is NADH-quinone oxidoreductase subunit A 2, found in Geotalea uraniireducens (strain Rf4) (Geobacter uraniireducens).